Reading from the N-terminus, the 185-residue chain is Pyruvate/ketoisovalerate oxidoreductases common subunit gamma (185 aa).

As to quaternary structure, heterotetramer of one alpha, one beta, one delta and one gamma chain.

It carries out the reaction 2 oxidized [2Fe-2S]-[ferredoxin] + pyruvate + CoA = 2 reduced [2Fe-2S]-[ferredoxin] + acetyl-CoA + CO2 + H(+). The enzyme catalyses 3-methyl-2-oxobutanoate + 2 oxidized [2Fe-2S]-[ferredoxin] + CoA = 2-methylpropanoyl-CoA + 2 reduced [2Fe-2S]-[ferredoxin] + CO2 + H(+). The chain is Pyruvate/ketoisovalerate oxidoreductases common subunit gamma (porG) from Thermococcus litoralis (strain ATCC 51850 / DSM 5473 / JCM 8560 / NS-C).